A 160-amino-acid polypeptide reads, in one-letter code: 6,7-dimethyl-8-ribityllumazine synthase (160 aa).

Residues Trp-28, 59 to 61 (SFE), and 82 to 84 (VII) contribute to the 5-amino-6-(D-ribitylamino)uracil site. 87–88 (GT) is a binding site for (2S)-2-hydroxy-3-oxobutyl phosphate. The active-site Proton donor is His-90. Phe-115 contributes to the 5-amino-6-(D-ribitylamino)uracil binding site. (2S)-2-hydroxy-3-oxobutyl phosphate is bound at residue Arg-129.

This sequence belongs to the DMRL synthase family.

It catalyses the reaction (2S)-2-hydroxy-3-oxobutyl phosphate + 5-amino-6-(D-ribitylamino)uracil = 6,7-dimethyl-8-(1-D-ribityl)lumazine + phosphate + 2 H2O + H(+). Its pathway is cofactor biosynthesis; riboflavin biosynthesis; riboflavin from 2-hydroxy-3-oxobutyl phosphate and 5-amino-6-(D-ribitylamino)uracil: step 1/2. Functionally, catalyzes the formation of 6,7-dimethyl-8-ribityllumazine by condensation of 5-amino-6-(D-ribitylamino)uracil with 3,4-dihydroxy-2-butanone 4-phosphate. This is the penultimate step in the biosynthesis of riboflavin. This chain is 6,7-dimethyl-8-ribityllumazine synthase, found in Clavibacter michiganensis subsp. michiganensis (strain NCPPB 382).